Consider the following 501-residue polypeptide: Symplectin (501 aa).

The CN hydrolase domain maps to 20-287 (PKTDMETREE…SKLLVAEILP (268 aa)). The Proton acceptor role is filled by E60. The Proton donor role is filled by K163. Residue C196 is the Nucleophile of the active site. C390 is modified (S-(coelenterazin-3a-yl)cysteine).

It belongs to the carbon-nitrogen hydrolase superfamily. BTD/VNN family. As to expression, photogenic gland (at protein level).

Monovalent ion-dependent bioluminescence photoprotein. Displays an emission peak at 470 nm (blue light). Trace amounts of monovalent ion trigger the intramolecular oxidation of the chromophore, didehydrocoelenterazine, with the emission of light. In Sthenoteuthis oualaniensis (Purpleback flying squid), this protein is Symplectin.